A 568-amino-acid polypeptide reads, in one-letter code: Natural resistance-associated macrophage protein 2 (568 aa).

Residues 1–40 form a disordered region; it reads MVLGPEQKMSDDSVSGDHGESASLGNINPAYSNPSLSQSP. Topologically, residues 1–69 are cytoplasmic; the sequence is MVLGPEQKMS…EEYSCFSFRK (69 aa). Residues 8-20 are compositionally biased toward basic and acidic residues; sequence KMSDDSVSGDHGE. The span at 23–40 shows a compositional bias: polar residues; it reads SLGNINPAYSNPSLSQSP. The helical transmembrane segment at 70 to 90 threads the bilayer; sequence LWAFTGPGFLMSIAYLDPGNI. The Extracellular segment spans residues 91 to 96; that stretch reads ESDLQS. The helical transmembrane segment at 97–117 threads the bilayer; the sequence is GAVAGFKLLWILLLATLVGLL. At 118–154 the chain is on the cytoplasmic side; sequence LQRLAARLGVVTGLHLAEVCHRQYPKVPRVILWLMVE. Residues 155-175 traverse the membrane as a helical segment; the sequence is LAIIGSDMQEVIGSAIAINLL. The Extracellular portion of the chain corresponds to 176–179; it reads SVGR. A helical transmembrane segment spans residues 180 to 200; sequence IPLWGGVLITIADTFVFLFLD. Topologically, residues 201-208 are cytoplasmic; that stretch reads KYGLRKLE. Residues 209-229 form a helical membrane-spanning segment; sequence AFFGFLITIMALTFGYEYVTV. The Extracellular segment spans residues 230 to 255; that stretch reads KPSQSQVLKGMFVPSCSGCRTPQIEQ. Residues 256-276 form a helical membrane-spanning segment; sequence AVGIVGAVIMPHNMYLHSALV. At 277-301 the chain is on the cytoplasmic side; sequence KSRQVNRNNKQEVREANKYFFIESC. Residues 302-322 traverse the membrane as a helical segment; that stretch reads IALFVSFIINVFVVSVFAEAF. Residues 323–360 lie on the Extracellular side of the membrane; it reads FGKTNEQVVEVCTNTSSPHAGLFPKDNSTLAVDIYKGG. Asparagine 336 and asparagine 349 each carry an N-linked (GlcNAc...) asparagine glycan. The helical transmembrane segment at 361–381 threads the bilayer; that stretch reads VVLGCYFGPAALYIWAVGILA. Topologically, residues 382–408 are cytoplasmic; the sequence is AGQSSTMTGTYSGQFVMEGFLNLKWSR. The chain crosses the membrane as a helical span at residues 409–429; that stretch reads FARVVLTRSIAIIPTLLVAVF. Topologically, residues 430–440 are extracellular; the sequence is QDVEHLTGMND. A helical membrane pass occupies residues 441–461; it reads FLNVLQSLQLPFALIPILTFT. Topologically, residues 462–482 are cytoplasmic; sequence SLRPVMSDFANGLGWRIAGGI. A helical transmembrane segment spans residues 483 to 503; sequence LVLIICSINMYFVVVYVRDLG. Residues 504–506 lie on the Extracellular side of the membrane; sequence HVA. A helical transmembrane segment spans residues 507–527; sequence LYVVAAVVSVAYLGFVFYLGW. Over 528 to 568 the chain is Cytoplasmic; sequence QCLIALGMSFLDCGHTCHLGLTAQPELYLLNTMDADSLVSR. A required for early endosome targeting region spans residues 555–559; that stretch reads YLLNT. 2 positions are modified to phosphoserine: serine 564 and serine 567.

Belongs to the NRAMP family. As to quaternary structure, forms a complex with NDFIP1 and NEDD4L, in cortical neurons, in response to iron and cobalt exposure; this interaction leads to SLC11A2 ubiquitination by NEDD4L and proteasome-dependent degradation. Interacts with NDFIP1, NDFIP2 and WWP2; this interaction leads to SLC11A2 ubiquitination by WWP2 and subsequent proteasome-dependent degradation. Interacts with COX2 and TOM6 at the outer mitochondrion membrane. Interacts with ARRDC1; this interaction regulates the incorporation of SLC11A2 into extracellular vesicles through an ubiquitination-dependent mechanism. Interacts with ARRDC4; controls the incorporation of SLC11A2 into extracellular vesicles through an ubiquitination-dependent mechanism. Ubiquitinated by WWP2. Post-translationally, N-glycosylated. As to expression, ubiquitously expressed. Expressed in erythroid progenitors.

Its subcellular location is the early endosome membrane. The protein localises to the apical cell membrane. It localises to the late endosome membrane. The protein resides in the lysosome membrane. It is found in the cell membrane. Its subcellular location is the extracellular vesicle membrane. The protein localises to the mitochondrion outer membrane. It localises to the golgi apparatus. The protein resides in the trans-Golgi network membrane. It is found in the recycling endosome membrane. The catalysed reaction is Fe(2+)(in) + H(+)(in) = Fe(2+)(out) + H(+)(out). The enzyme catalyses Co(2+)(out) + H(+)(out) = Co(2+)(in) + H(+)(in). It catalyses the reaction Cd(2+)(out) + H(+)(out) = Cd(2+)(in) + H(+)(in). It carries out the reaction Mn(2+)(in) + H(+)(in) = Mn(2+)(out) + H(+)(out). The catalysed reaction is Zn(2+)(out) + H(+)(out) = Zn(2+)(in) + H(+)(in). The enzyme catalyses Ni(2+)(out) + H(+)(out) = Ni(2+)(in) + H(+)(in). It catalyses the reaction H(+)(in) = H(+)(out). It carries out the reaction Fe(2+)(in) = Fe(2+)(out). In terms of biological role, proton-coupled metal ion symporter operating with a proton to metal ion stoichiometry of 1:1. Selectively transports various divalent metal cations, in decreasing affinity: Cd(2+) &gt; Fe(2+) &gt; Co(2+), Mn(2+) &gt;&gt; Zn(2+), Ni(2+), VO(2+). Essential for maintenance of iron homeostasis by modulating intestinal absorption of dietary Fe(2+) and TF-associated endosomal Fe(2+) transport in erythroid precursors and other cells. Enables Fe(2+) and Mn(2+) ion entry into mitochondria, and is thus expected to promote mitochondrial heme synthesis, iron-sulfur cluster biogenesis and antioxidant defense. Can mediate uncoupled fluxes of either protons or metal ions. The polypeptide is Natural resistance-associated macrophage protein 2 (SLC11A2) (Homo sapiens (Human)).